Reading from the N-terminus, the 198-residue chain is (S)-2-hydroxypropylphosphonic acid epoxidase (198 aa).

An HTH cro/C1-type domain is found at 15-70 (LKDRREQVKMDHAALASLLGETPETVAAWENGEGGELTLTQLGRIAHVLGTSIGAL). K23 lines the substrate pocket. The segment at residues 26-45 (HAALASLLGETPETVAAWEN) is a DNA-binding region (H-T-H motif). Residues R97, Y105, 135–138 (NSGH), and E142 each bind substrate. Residues 136 to 196 (SGHAGNEFLF…GTGSAKLIAV (61 aa)) form the Cupin type-2 domain. Fe cation-binding residues include H138, E142, and H180.

Belongs to the non-heme iron-dependent dioxygenase family. As to quaternary structure, homotetramer. Fe(2+) is required as a cofactor.

The catalysed reaction is (S)-2-hydroxypropylphosphonate + H2O2 = (1R,2S)-epoxypropylphosphonate + 2 H2O. It functions in the pathway antibiotic biosynthesis; fosfomycin biosynthesis. In terms of biological role, non-heme-dependent dioxygenase that catalyzes the oxidative epoxidation of (S)-2-hydroxypropylphosphonate into (1R,2S)-epoxypropylphosphonate, the final step in the biosynthesis of fosfomycin antibiotic. The polypeptide is (S)-2-hydroxypropylphosphonic acid epoxidase (hppE) (Streptomyces wedmorensis).